The chain runs to 1035 residues: FACT complex subunit SPT16 (1035 aa).

Residues 432-500 (FLKKEDEEEE…AKRRLTEQKG (69 aa)) adopt a coiled-coil conformation. Disordered stretches follow at residues 491–520 (AKRR…ASQV) and 920–1035 (EQGG…KRKK). The segment covering 499-519 (KGGQQTMKARKSNVSYKNASQ) has biased composition (polar residues). Over residues 929–985 (PDGEGSDAAEGDSESELDDETFNPSEDEEEEEEDSDEDYSDETEDSVDSEESADSEE) the composition is skewed to acidic residues. The span at 986-1006 (ESGKDWDELEEEARKADRESL) shows a compositional bias: basic and acidic residues.

It belongs to the peptidase M24 family. SPT16 subfamily. As to quaternary structure, component of the FACT complex (also called the DUF complex), a stable heterodimer of ssrp1 and supt16h. May also be a component of a ck2-spt16-ssrp1 complex composed of ssrp1, supt16h, csnk2a1, csnk2a2 and csnk2b. The FACT complex may also interact with vcp.

It localises to the nucleus. The protein resides in the chromosome. Functionally, component of the FACT complex, a general chromatin factor that acts to reorganize nucleosomes. The FACT complex is involved in multiple processes that require DNA as a template such as mRNA elongation, DNA replication and DNA repair. During transcription elongation the FACT complex acts as a histone chaperone that both destabilizes and restores nucleosomal structure. It facilitates the passage of RNA polymerase II and transcription by promoting the dissociation of one histone H2A-H2B dimer from the nucleosome, then subsequently promotes the reestablishment of the nucleosome following the passage of RNA polymerase II. The polypeptide is FACT complex subunit SPT16 (supt16h) (Xenopus laevis (African clawed frog)).